A 196-amino-acid polypeptide reads, in one-letter code: Glutathione-specific gamma-glutamylcyclotransferase 1 (196 aa).

15-20 (IFGYGS) is a binding site for substrate. Catalysis depends on E95, which acts as the Proton acceptor.

Belongs to the gamma-glutamylcyclotransferase family. ChaC subfamily.

The protein resides in the cytoplasm. The protein localises to the cytosol. It localises to the golgi apparatus. Its subcellular location is the trans-Golgi network. The catalysed reaction is glutathione = L-cysteinylglycine + 5-oxo-L-proline. Catalyzes the cleavage of glutathione into 5-oxo-L-proline and a Cys-Gly dipeptide. Acts specifically on glutathione, but not on other gamma-glutamyl peptides. Glutathione depletion is an important factor for apoptosis initiation and execution. Acts as a pro-apoptotic component of the unfolded protein response pathway by mediating the pro-apoptotic effects of the ATF4-ATF3-DDIT3/CHOP cascade. Negative regulator of Notch signaling pathway involved in embryonic neurogenesis: acts by inhibiting Notch cleavage by furin, maintaining Notch in an immature inactive form, thereby promoting neurogenesis in embryos. This Danio rerio (Zebrafish) protein is Glutathione-specific gamma-glutamylcyclotransferase 1.